The following is a 577-amino-acid chain: Autophagy-related protein 20 (577 aa).

Positions 57-81 (GQSYVAPHSGGGRTSSGSSSSASLQ) are disordered. Residues 95 to 239 (GEQGRVRILE…DFLDPNNANW (145 aa)) form the PX domain. 4 residues coordinate a 1,2-diacyl-sn-glycero-3-phospho-(1D-myo-inositol-3-phosphate): Arg-131, Ser-133, Lys-157, and Arg-205.

It belongs to the sorting nexin family.

It is found in the endosome membrane. It localises to the preautophagosomal structure membrane. In terms of biological role, required for cytoplasm to vacuole transport (Cvt), pexophagy and mitophagy. Also involved in endoplasmic reticulum-specific autophagic process and is essential for the survival of cells subjected to severe ER stress. Functions in protein retrieval from the endocytic pathway. This Eremothecium gossypii (strain ATCC 10895 / CBS 109.51 / FGSC 9923 / NRRL Y-1056) (Yeast) protein is Autophagy-related protein 20 (ATG20).